A 250-amino-acid polypeptide reads, in one-letter code: Imidazole glycerol phosphate synthase subunit HisF (250 aa).

Residues aspartate 11 and aspartate 130 contribute to the active site.

Belongs to the HisA/HisF family. Heterodimer of HisH and HisF.

The protein localises to the cytoplasm. It catalyses the reaction 5-[(5-phospho-1-deoxy-D-ribulos-1-ylimino)methylamino]-1-(5-phospho-beta-D-ribosyl)imidazole-4-carboxamide + L-glutamine = D-erythro-1-(imidazol-4-yl)glycerol 3-phosphate + 5-amino-1-(5-phospho-beta-D-ribosyl)imidazole-4-carboxamide + L-glutamate + H(+). The protein operates within amino-acid biosynthesis; L-histidine biosynthesis; L-histidine from 5-phospho-alpha-D-ribose 1-diphosphate: step 5/9. Its function is as follows. IGPS catalyzes the conversion of PRFAR and glutamine to IGP, AICAR and glutamate. The HisF subunit catalyzes the cyclization activity that produces IGP and AICAR from PRFAR using the ammonia provided by the HisH subunit. The polypeptide is Imidazole glycerol phosphate synthase subunit HisF (Bacteroides fragilis (strain ATCC 25285 / DSM 2151 / CCUG 4856 / JCM 11019 / LMG 10263 / NCTC 9343 / Onslow / VPI 2553 / EN-2)).